Here is a 59-residue protein sequence, read N- to C-terminus: FDVNSHTTPCGPVTCSGAQMCEVDKCVCSDLHCKVKCEHGFKKDDNGCEYACICADAPQ.

Disulfide bonds link C10–C21, C15–C26, C28–C48, C33–C52, and C37–C54. An Antistasin-like domain is found at 28–54; that stretch reads CSDLHCKVKCEHGFKKDDNGCEYACIC.

Its subcellular location is the secreted. Strong inhibitor of mammalian trypsin, plasmin and acrosin. The chain is Bdellastasin from Hirudo medicinalis (Medicinal leech).